Reading from the N-terminus, the 263-residue chain is Neurogenin-2 (263 aa).

Positions 20–76 are disordered; that stretch reads LGSASPASATLTPMSSSADEEEDEELRRPGSARGQRGAEAEQGVQGSPASGAGGCRP. Positions 24–36 are enriched in polar residues; that stretch reads SPASATLTPMSSS. In terms of domain architecture, bHLH spans 112–164; that stretch reads TRRLKANNRERNRMHNLNAALDALREVLPTFPEDAKLTKIETLRFAHNYIWAL. A compositionally biased stretch (low complexity) spans 197 to 231; that stretch reads LGASGDSPSPPSSWSCTNSPASSSNSTSPYSCTLS. The tract at residues 197 to 253 is disordered; that stretch reads LGASGDSPSPPSSWSCTNSPASSSNSTSPYSCTLSPASPGSDVDYWQPPPPEKHRYA.

In terms of assembly, efficient DNA binding requires dimerization with another bHLH protein.

It is found in the nucleus. Functionally, transcriptional regulator. Involved in neuronal differentiation. Activates transcription by binding to the E box (5'-CANNTG-3'). The sequence is that of Neurogenin-2 (Neurog2) from Mus musculus (Mouse).